Consider the following 380-residue polypeptide: Bifunctional dihydropteroate synthase/dihydropteroate reductase (380 aa).

The segment at 1–104 (MIVKRLNPDA…SQPFGLKHLA (104 aa)) is dihydropteroate reductase. Residues 105 to 380 (QELKSHLKAP…KVFKSLEETD (276 aa)) are dihydropteroate synthase. The 253-residue stretch at 119–371 (PQIMAVLNLT…DIDEHIDLIK (253 aa)) folds into the Pterin-binding domain. Mg(2+) is bound at residue N126. Residues D202, N221, D289, K325, and 359–361 (RVH) contribute to the (7,8-dihydropterin-6-yl)methyl diphosphate site.

This sequence in the C-terminal section; belongs to the DHPS family. FAD serves as cofactor. The cofactor is FMN. Mg(2+) is required as a cofactor.

It catalyses the reaction (7,8-dihydropterin-6-yl)methyl diphosphate + 4-aminobenzoate = 7,8-dihydropteroate + diphosphate. The enzyme catalyses (6S)-5,6,7,8-tetrahydropteroate + NAD(+) = 7,8-dihydropteroate + NADH + H(+). It participates in cofactor biosynthesis; tetrahydrofolate biosynthesis; 7,8-dihydrofolate from 2-amino-4-hydroxy-6-hydroxymethyl-7,8-dihydropteridine diphosphate and 4-aminobenzoate: step 1/2. In terms of biological role, bifunctional enzyme that catalyzes the formation of dihydropteroate, the immediate precursor of folic acid and the reduction of dihydropteroate to tetrahydropteroate. The chain is Bifunctional dihydropteroate synthase/dihydropteroate reductase from Helicobacter pylori (strain ATCC 700392 / 26695) (Campylobacter pylori).